A 545-amino-acid chain; its full sequence is Chaperonin GroEL 2 (545 aa).

ATP contacts are provided by residues 30 to 33, Lys-51, 87 to 91, Gly-415, 479 to 481, and Asp-495; these read TLGP, DGTTT, and NAA.

It belongs to the chaperonin (HSP60) family. Forms a cylinder of 14 subunits composed of two heptameric rings stacked back-to-back. Interacts with the co-chaperonin GroES.

It localises to the cytoplasm. It carries out the reaction ATP + H2O + a folded polypeptide = ADP + phosphate + an unfolded polypeptide.. Its function is as follows. Together with its co-chaperonin GroES, plays an essential role in assisting protein folding. The GroEL-GroES system forms a nano-cage that allows encapsulation of the non-native substrate proteins and provides a physical environment optimized to promote and accelerate protein folding. This Escherichia coli O1:K1 / APEC protein is Chaperonin GroEL 2.